The primary structure comprises 381 residues: L-lactate dehydrogenase (381 aa).

Residues 1–380 (MIISASTDYR…TRDSLVRELG (380 aa)) form the FMN hydroxy acid dehydrogenase domain. Y24 contributes to the substrate binding site. 2 residues coordinate FMN: S106 and Q127. Y129 lines the substrate pocket. T155 is a binding site for FMN. Position 164 (R164) interacts with substrate. K251 contacts FMN. H275 serves as the catalytic Proton acceptor. Position 278 (R278) interacts with substrate. Residue 306 to 330 (DSGIRSGLDVVRMIALGADTVLIGR) participates in FMN binding.

The protein belongs to the FMN-dependent alpha-hydroxy acid dehydrogenase family. In terms of assembly, homotetramer. FMN is required as a cofactor.

The protein localises to the cell inner membrane. It catalyses the reaction (S)-lactate + A = pyruvate + AH2. Catalyzes the conversion of L-lactate to pyruvate. Is coupled to the respiratory chain. This chain is L-lactate dehydrogenase, found in Pseudomonas putida (strain ATCC 700007 / DSM 6899 / JCM 31910 / BCRC 17059 / LMG 24140 / F1).